A 596-amino-acid chain; its full sequence is Potassium-transporting ATPase potassium-binding subunit (596 aa).

10 helical membrane-spanning segments follow: residues 6–26 (ILTI…LGGF), 67–87 (AIGL…LQLF), 136–156 (GLTT…IALI), 177–197 (ITLY…VGQG), 283–303 (LSNF…CFTF), 314–334 (WVVL…AVHF), 413–433 (GLYG…LMIG), 450–470 (MVAI…AIAV), 518–538 (MLAI…LALA), and 560–580 (LFIV…YVPA).

Belongs to the KdpA family. In terms of assembly, the system is composed of three essential subunits: KdpA, KdpB and KdpC.

It is found in the cell inner membrane. Its function is as follows. Part of the high-affinity ATP-driven potassium transport (or Kdp) system, which catalyzes the hydrolysis of ATP coupled with the electrogenic transport of potassium into the cytoplasm. This subunit binds the periplasmic potassium ions and delivers the ions to the membrane domain of KdpB through an intramembrane tunnel. The sequence is that of Potassium-transporting ATPase potassium-binding subunit from Polynucleobacter asymbioticus (strain DSM 18221 / CIP 109841 / QLW-P1DMWA-1) (Polynucleobacter necessarius subsp. asymbioticus).